Consider the following 599-residue polypeptide: Aspartate--tRNA(Asp/Asn) ligase (599 aa).

Glu174 contacts L-aspartate. The segment at 198–201 (QLFK) is aspartate. An L-aspartate-binding site is contributed by Arg220. ATP-binding positions include 220-222 (RDE) and Gln229. Position 457 (His457) interacts with L-aspartate. Residue Glu491 participates in ATP binding. Residue Arg498 participates in L-aspartate binding. 543–546 (GLDR) is an ATP binding site.

Belongs to the class-II aminoacyl-tRNA synthetase family. Type 1 subfamily. Homodimer.

It localises to the cytoplasm. The catalysed reaction is tRNA(Asx) + L-aspartate + ATP = L-aspartyl-tRNA(Asx) + AMP + diphosphate. Aspartyl-tRNA synthetase with relaxed tRNA specificity since it is able to aspartylate not only its cognate tRNA(Asp) but also tRNA(Asn). Reaction proceeds in two steps: L-aspartate is first activated by ATP to form Asp-AMP and then transferred to the acceptor end of tRNA(Asp/Asn). In Paraburkholderia phytofirmans (strain DSM 17436 / LMG 22146 / PsJN) (Burkholderia phytofirmans), this protein is Aspartate--tRNA(Asp/Asn) ligase.